We begin with the raw amino-acid sequence, 493 residues long: Extracellular tyrosine-protein kinase PKDCC (493 aa).

An N-terminal signal peptide occupies residues 1–32 (MRRRRAAVAAGFCASFLLGSVLNVLFAPGSEP). The segment at 28 to 128 (PGSEPPRPGQ…PGPGSPGPGP (101 aa)) is disordered. The segment covering 30 to 46 (SEPPRPGQSPEPSPAPG) has biased composition (pro residues). Positions 52–69 (GRGELARQIRARYEEVQR) are enriched in basic and acidic residues. Composition is skewed to pro residues over residues 95 to 105 (PGLPRPRPPWA) and 114 to 127 (GWPP…PGPG). N137 carries N-linked (GlcNAc...) asparagine glycosylation. In terms of domain architecture, Protein kinase spans 138 to 493 (VSGAQYMGSG…NKTTYVKASG (356 aa)). ATP contacts are provided by residues 144-152 (MGSGYTKAV) and K166. Y148 bears the Phosphotyrosine mark. At S177 the chain carries Phosphoserine. The active-site Proton acceptor is D278. N-linked (GlcNAc...) asparagine glycosylation is found at N320, N369, N400, N460, and N484.

This sequence belongs to the protein kinase superfamily. In terms of processing, N-glycosylated. Post-translationally, phosphorylated on tyrosines; probably via autophosphorylation. In terms of tissue distribution, highly expressed in platelets.

The protein resides in the secreted. It is found in the golgi apparatus. The catalysed reaction is L-tyrosyl-[protein] + ATP = O-phospho-L-tyrosyl-[protein] + ADP + H(+). Secreted tyrosine-protein kinase that mediates phosphorylation of extracellular proteins and endogenous proteins in the secretory pathway, which is essential for patterning at organogenesis stages. Mediates phosphorylation of MMP1, MMP13, MMP14, MMP19 and ERP29. Probably plays a role in platelets: rapidly and quantitatively secreted from platelets in response to stimulation of platelet degranulation. May also have serine/threonine protein kinase activity. Required for longitudinal bone growth through regulation of chondrocyte differentiation. May be indirectly involved in protein transport from the Golgi apparatus to the plasma membrane. This Homo sapiens (Human) protein is Extracellular tyrosine-protein kinase PKDCC.